Here is a 161-residue protein sequence, read N- to C-terminus: RNA pyrophosphohydrolase (161 aa).

The region spanning glycine 6–lysine 149 is the Nudix hydrolase domain. A Nudix box motif is present at residues glycine 38–glycine 59.

This sequence belongs to the Nudix hydrolase family. RppH subfamily. Requires a divalent metal cation as cofactor.

Functionally, accelerates the degradation of transcripts by removing pyrophosphate from the 5'-end of triphosphorylated RNA, leading to a more labile monophosphorylated state that can stimulate subsequent ribonuclease cleavage. The chain is RNA pyrophosphohydrolase from Marinomonas sp. (strain MWYL1).